The chain runs to 104 residues: V-type ATP synthase subunit F (104 aa).

Belongs to the V-ATPase F subunit family.

Its function is as follows. Produces ATP from ADP in the presence of a proton gradient across the membrane. This is V-type ATP synthase subunit F from Thermus thermophilus (strain ATCC BAA-163 / DSM 7039 / HB27).